A 283-amino-acid chain; its full sequence is uncharacterized protein (283 aa).

3 helical membrane passes run 18–38, 61–81, and 94–114; these read VYDIIVVIVVMALATIIAKLI, VIYFGIIIVAFIAVLPALGLD, and IVLGFASQSVVANLVSGIFLI.

This sequence belongs to the MscS (TC 1.A.23) family.

The protein resides in the cell membrane. This is an uncharacterized protein from Archaeoglobus fulgidus (strain ATCC 49558 / DSM 4304 / JCM 9628 / NBRC 100126 / VC-16).